A 207-amino-acid chain; its full sequence is FMN-dependent NADH:quinone oxidoreductase 1 (207 aa).

FMN contacts are provided by residues S9, S15–S17, and T139–G142.

The protein belongs to the azoreductase type 1 family. Homodimer. FMN serves as cofactor.

It catalyses the reaction 2 a quinone + NADH + H(+) = 2 a 1,4-benzosemiquinone + NAD(+). It carries out the reaction N,N-dimethyl-1,4-phenylenediamine + anthranilate + 2 NAD(+) = 2-(4-dimethylaminophenyl)diazenylbenzoate + 2 NADH + 2 H(+). Functionally, quinone reductase that provides resistance to thiol-specific stress caused by electrophilic quinones. Also exhibits azoreductase activity. Catalyzes the reductive cleavage of the azo bond in aromatic azo compounds to the corresponding amines. The polypeptide is FMN-dependent NADH:quinone oxidoreductase 1 (Trichormus variabilis (strain ATCC 29413 / PCC 7937) (Anabaena variabilis)).